We begin with the raw amino-acid sequence, 268 residues long: Ethylene-responsive transcription factor ERN1 (268 aa).

Residues 1-21 (MEIQFQQPNMQNQKAGISVTN) show a composition bias toward polar residues. Residues 1–36 (MEIQFQQPNMQNQKAGISVTNKGGKFKGRNRNSNNT) form a disordered region. The segment at residues 38–95 (KFVGVRQRPSGRWVAEIKDTTQKIRMWLGTFETAEEAARAYDEAACLLRGSNTRTNFI) is a DNA-binding region (AP2/ERF). The segment at 114 to 154 (NRKGDKKQEDGAVASAPSNSKTTISNTSTITSNDDNKESTL) is disordered. The segment covering 131 to 146 (SNSKTTISNTSTITSN) has biased composition (low complexity).

Belongs to the AP2/ERF transcription factor family. ERF subfamily. In terms of tissue distribution, expressed in roots, root hairs and leaves. Expressed in root epidermis and root hairs.

The protein localises to the nucleus. Functionally, transcription factor involved in symbiotic nodule signaling in response to rhizobial Nod factors (NFs). Binds to the GCC-box (NF-responsive box) of ENOD11 promoter. Acts as a transcriptional activator of NF-responsive box-containing target gene promoters in root hairs. Functions as a transcriptional regulator required for root infection by symbiotic rhizobia, infection thread (IT) formation and maintenance, and nodule development. Necessary for NF-induced gene expression and spontaneous nodulation activated by CCAMK. Functions downstream of CCAMK to activate nodulation gene expression. Involved in early stages of root nodule development. Functions redundantly with ERN2. Is essential with ERN2 for the initiation of root hair infection, and nodule organogenesis and development. Required for accurate expression of the NF signaling genes ENOD11 and ENOD12. In Medicago truncatula (Barrel medic), this protein is Ethylene-responsive transcription factor ERN1.